The chain runs to 84 residues: Large ribosomal subunit protein bL31 (84 aa).

The Zn(2+) site is built by Cys-16, Cys-18, Cys-38, and Cys-41.

This sequence belongs to the bacterial ribosomal protein bL31 family. Type A subfamily. As to quaternary structure, part of the 50S ribosomal subunit. Zn(2+) is required as a cofactor.

Its function is as follows. Binds the 23S rRNA. The sequence is that of Large ribosomal subunit protein bL31 from Mycobacterium leprae (strain Br4923).